Reading from the N-terminus, the 417-residue chain is MLDLRYITENTEDLKKVLELRGFKEIGIIDELKSIIQRKREFQKEADILREERNKASKEVGKIKQSGGDITKISASVKLVGEKIKEIESKLEQEENALLNINLGLPNILDPKVPPGKSEHDNIVQYEVGKIPTFQFVPKTHFEIGEALHWIDFEKGVKLSGARAYTYWKDGARLERALMNFMLDVHTKEHDYTEVWVPSMVNDESMMATGQYPKFKDEFYRIDKDELNLIPTAEVPLTNLYRDEIIPEDQLPISVTAHTSCFRREAGSYGKDTRGLVRVHQFQKVELVKFCKPEDSEEEHKKMLSHAENILKKLELPYRVIILCSGDISANSSITYDIEVWMPGLNRYMEISSVSNFRDFQARRGKIRYKSKDGKNQLVHTINGSGLALGRTYAAILENFQNEDGTLRIPEVLKSYF.

232-234 (TAE) is a binding site for L-serine. ATP is bound by residues 263–265 (RRE) and V279. E286 is a binding site for L-serine. 350–353 (EISS) is a binding site for ATP. Residue S385 coordinates L-serine.

The protein belongs to the class-II aminoacyl-tRNA synthetase family. Type-1 seryl-tRNA synthetase subfamily. Homodimer. The tRNA molecule binds across the dimer.

It localises to the cytoplasm. It catalyses the reaction tRNA(Ser) + L-serine + ATP = L-seryl-tRNA(Ser) + AMP + diphosphate + H(+). The enzyme catalyses tRNA(Sec) + L-serine + ATP = L-seryl-tRNA(Sec) + AMP + diphosphate + H(+). It functions in the pathway aminoacyl-tRNA biosynthesis; selenocysteinyl-tRNA(Sec) biosynthesis; L-seryl-tRNA(Sec) from L-serine and tRNA(Sec): step 1/1. Its function is as follows. Catalyzes the attachment of serine to tRNA(Ser). Is also able to aminoacylate tRNA(Sec) with serine, to form the misacylated tRNA L-seryl-tRNA(Sec), which will be further converted into selenocysteinyl-tRNA(Sec). The protein is Serine--tRNA ligase of Leptospira interrogans serogroup Icterohaemorrhagiae serovar copenhageni (strain Fiocruz L1-130).